A 134-amino-acid chain; its full sequence is T-cell receptor alpha chain V region RL-5 (134 aa).

Positions 1-20 (MFSASCSVTVVVLLITVRRT) are cleaved as a signal peptide. Residues 21–114 (NGASVTQTEG…DSAVYYCALR (94 aa)) form a v segment region. The tract at residues 115 to 134 (RGASNKLTLGTGTLLKVELN) is j segment. A glycan (N-linked (GlcNAc...) asparagine) is linked at asparagine 134.

Post-translationally, rearrangement with the C region would elongate the sequence with Ile-Thr-; which creates a potential N-glycosylation site at Asn-134.

This is T-cell receptor alpha chain V region RL-5 from Oryctolagus cuniculus (Rabbit).